A 407-amino-acid polypeptide reads, in one-letter code: Chorismate synthase (407 aa).

NADP(+) is bound by residues Arg-40 and Arg-46. FMN is bound by residues 138-140 (RAS) and 259-260 (QA). The segment covering 275 to 284 (RRGSRAHDEM) has biased composition (basic and acidic residues). Residues 275–308 (RRGSRAHDEMYPGTDGVVRSTNRAGGLEGGMTNG) are disordered. Residues Gly-303, 318-322 (KPIST), and Arg-344 each bind FMN.

This sequence belongs to the chorismate synthase family. As to quaternary structure, homotetramer. FMNH2 is required as a cofactor.

The enzyme catalyses 5-O-(1-carboxyvinyl)-3-phosphoshikimate = chorismate + phosphate. It functions in the pathway metabolic intermediate biosynthesis; chorismate biosynthesis; chorismate from D-erythrose 4-phosphate and phosphoenolpyruvate: step 7/7. In terms of biological role, catalyzes the anti-1,4-elimination of the C-3 phosphate and the C-6 proR hydrogen from 5-enolpyruvylshikimate-3-phosphate (EPSP) to yield chorismate, which is the branch point compound that serves as the starting substrate for the three terminal pathways of aromatic amino acid biosynthesis. This reaction introduces a second double bond into the aromatic ring system. The sequence is that of Chorismate synthase from Mycobacterium marinum (strain ATCC BAA-535 / M).